The chain runs to 276 residues: Elongation factor Ts (276 aa).

The interval Thr80–Val83 is involved in Mg(2+) ion dislocation from EF-Tu.

Belongs to the EF-Ts family.

The protein localises to the cytoplasm. In terms of biological role, associates with the EF-Tu.GDP complex and induces the exchange of GDP to GTP. It remains bound to the aminoacyl-tRNA.EF-Tu.GTP complex up to the GTP hydrolysis stage on the ribosome. The polypeptide is Elongation factor Ts (Kocuria rhizophila (strain ATCC 9341 / DSM 348 / NBRC 103217 / DC2201)).